The chain runs to 187 residues: Ribosome maturation factor RimM (187 aa).

The 74-residue stretch at 96-169 (EDEFFYADLE…KLVIDPTAAG (74 aa)) folds into the PRC barrel domain.

This sequence belongs to the RimM family. In terms of assembly, binds ribosomal protein uS19.

Its subcellular location is the cytoplasm. An accessory protein needed during the final step in the assembly of 30S ribosomal subunit, possibly for assembly of the head region. Essential for efficient processing of 16S rRNA. May be needed both before and after RbfA during the maturation of 16S rRNA. It has affinity for free ribosomal 30S subunits but not for 70S ribosomes. This is Ribosome maturation factor RimM from Sinorhizobium medicae (strain WSM419) (Ensifer medicae).